The primary structure comprises 28 residues: Somatostatin-2 (28 aa).

Cys17 and Cys28 are joined by a disulfide.

It belongs to the somatostatin family.

It is found in the secreted. Somatostatin inhibits the release of somatotropin. The polypeptide is Somatostatin-2 (sst2) (Oreochromis niloticus (Nile tilapia)).